Here is a 470-residue protein sequence, read N- to C-terminus: Argininosuccinate lyase (470 aa).

Belongs to the lyase 1 family. Argininosuccinate lyase subfamily.

It localises to the cytoplasm. It catalyses the reaction 2-(N(omega)-L-arginino)succinate = fumarate + L-arginine. It functions in the pathway amino-acid biosynthesis; L-arginine biosynthesis; L-arginine from L-ornithine and carbamoyl phosphate: step 3/3. This is Argininosuccinate lyase from Mycobacterium sp. (strain JLS).